Here is a 224-residue protein sequence, read N- to C-terminus: Response regulator protein GraR (224 aa).

The Response regulatory domain occupies 2-115 (DILLVEDDMT…VLIAKLQAIY (114 aa)). Asp-51 bears the 4-aspartylphosphate mark. The segment at residues 126–224 (KRVLSWQDAI…KIGKGYMAHG (99 aa)) is a DNA-binding region (ompR/PhoB-type).

Phosphorylated by GraS.

It is found in the cytoplasm. In terms of biological role, member of the two-component regulatory system GraR/GraS involved in resistance against cationic antimicrobial peptides (CAMPs). In Staphylococcus saprophyticus subsp. saprophyticus (strain ATCC 15305 / DSM 20229 / NCIMB 8711 / NCTC 7292 / S-41), this protein is Response regulator protein GraR (graR).